A 157-amino-acid polypeptide reads, in one-letter code: Vitamin K-dependent protein C (157 aa).

One can recognise a Peptidase S1 domain in the interval 1-157 (ENGEVDLDIQ…GCGRLHNYGV (157 aa)). Residue Asn-17 is glycosylated (N-linked (GlcNAc...) asparagine). Asp-26 (charge relay system) is an active-site residue. N-linked (GlcNAc...) asparagine glycosylation is present at Asn-78. Cystine bridges form between Cys-96–Cys-110 and Cys-121–Cys-149. Residue Ser-125 is the Charge relay system of the active site.

This sequence belongs to the peptidase S1 family. As to expression, plasma; synthesized in the liver.

The protein localises to the secreted. The protein resides in the golgi apparatus. It is found in the endoplasmic reticulum. The catalysed reaction is Degradation of blood coagulation factors Va and VIIIa.. Its function is as follows. Protein C is a vitamin K-dependent serine protease that regulates blood coagulation by inactivating factors Va and VIIIa in the presence of calcium ions and phospholipids. Exerts a protective effect on the endothelial cell barrier function. The protein is Vitamin K-dependent protein C (PROC) of Equus caballus (Horse).